The chain runs to 238 residues: D/L-lactic acid transporter (238 aa).

2 consecutive transmembrane segments (helical) span residues 2–22 (VHQL…GVGV) and 39–59 (IFAI…FGNV). The NPA 1 signature appears at 62–64 (NPA). A run of 3 helical transmembrane segments spans residues 80–100 (FIPY…IVWI), 135–155 (FFVE…ISEI), and 158–178 (PGIV…GLGG). The NPA 2 motif lies at 185 to 187 (NLA). A helical transmembrane segment spans residues 211–231 (YGIIVPGIAPFVGAAIAAWFM).

This sequence belongs to the MIP/aquaporin (TC 1.A.8) family.

The protein localises to the cell membrane. Functionally, transporter that facilitates the transmembrane diffusion of D/L-lactic acid. Is involved in the cellular racemization of lactate and lactate metabolism. The transported molecule is indeed lactic acid and not the lactate anion, in agreement with the assumption that, with very few exceptions, MIPs (major intrinsic proteins) only facilitate the transport of uncharged solutes. Also facilitates urea and H(2)O(2) diffusion across membranes, but is not permeable to water, glycerol and dihydroxyacetone. The polypeptide is D/L-lactic acid transporter (Lactiplantibacillus plantarum (strain ATCC BAA-793 / NCIMB 8826 / WCFS1) (Lactobacillus plantarum)).